We begin with the raw amino-acid sequence, 429 residues long: Adenosylhomocysteinase (429 aa).

Substrate contacts are provided by Thr-64, Asp-136, and Glu-161. 162-164 (TTT) serves as a coordination point for NAD(+). Positions 191 and 195 each coordinate substrate. NAD(+)-binding positions include Asn-196, 225 to 230 (GYGWCG), Glu-248, Asn-283, 304 to 306 (SGH), and Asn-351.

This sequence belongs to the adenosylhomocysteinase family. NAD(+) is required as a cofactor.

Its subcellular location is the cytoplasm. It carries out the reaction S-adenosyl-L-homocysteine + H2O = L-homocysteine + adenosine. Its pathway is amino-acid biosynthesis; L-homocysteine biosynthesis; L-homocysteine from S-adenosyl-L-homocysteine: step 1/1. May play a key role in the regulation of the intracellular concentration of adenosylhomocysteine. The chain is Adenosylhomocysteinase from Gloeothece citriformis (strain PCC 7424) (Cyanothece sp. (strain PCC 7424)).